The chain runs to 382 residues: Dual-specificity RNA methyltransferase RlmN (382 aa).

The Proton acceptor role is filled by glutamate 96. The region spanning 102-342 is the Radical SAM core domain; it reads QGKRGTLCVS…VRTTRGEDID (241 aa). A disulfide bridge links cysteine 109 with cysteine 345. [4Fe-4S] cluster-binding residues include cysteine 116, cysteine 120, and cysteine 123. S-adenosyl-L-methionine is bound by residues 170–171, serine 202, 224–226, and asparagine 302; these read GE and SLH. The active-site S-methylcysteine intermediate is cysteine 345.

Belongs to the radical SAM superfamily. RlmN family. It depends on [4Fe-4S] cluster as a cofactor.

Its subcellular location is the cytoplasm. It catalyses the reaction adenosine(2503) in 23S rRNA + 2 reduced [2Fe-2S]-[ferredoxin] + 2 S-adenosyl-L-methionine = 2-methyladenosine(2503) in 23S rRNA + 5'-deoxyadenosine + L-methionine + 2 oxidized [2Fe-2S]-[ferredoxin] + S-adenosyl-L-homocysteine. The enzyme catalyses adenosine(37) in tRNA + 2 reduced [2Fe-2S]-[ferredoxin] + 2 S-adenosyl-L-methionine = 2-methyladenosine(37) in tRNA + 5'-deoxyadenosine + L-methionine + 2 oxidized [2Fe-2S]-[ferredoxin] + S-adenosyl-L-homocysteine. Functionally, specifically methylates position 2 of adenine 2503 in 23S rRNA and position 2 of adenine 37 in tRNAs. m2A2503 modification seems to play a crucial role in the proofreading step occurring at the peptidyl transferase center and thus would serve to optimize ribosomal fidelity. The chain is Dual-specificity RNA methyltransferase RlmN from Pseudomonas syringae pv. syringae (strain B728a).